Reading from the N-terminus, the 560-residue chain is Chaperonin GroEL 2 (560 aa).

ATP-binding positions include 29–32 (TIGP), 86–90 (DGTTT), G413, and D492. The interval 520–542 (DKPEPPSAPGAEGGDPMGGMGGM) is disordered. The span at 530–542 (AEGGDPMGGMGGM) shows a compositional bias: gly residues.

It belongs to the chaperonin (HSP60) family. In terms of assembly, forms a cylinder of 14 subunits composed of two heptameric rings stacked back-to-back. Interacts with the co-chaperonin GroES.

Its subcellular location is the cytoplasm. The catalysed reaction is ATP + H2O + a folded polypeptide = ADP + phosphate + an unfolded polypeptide.. Its function is as follows. Together with its co-chaperonin GroES, plays an essential role in assisting protein folding. The GroEL-GroES system forms a nano-cage that allows encapsulation of the non-native substrate proteins and provides a physical environment optimized to promote and accelerate protein folding. The polypeptide is Chaperonin GroEL 2 (Prochlorococcus marinus (strain NATL2A)).